We begin with the raw amino-acid sequence, 189 residues long: GTPase NRas (189 aa).

Residues 10–18 and 29–30 each bind GTP; these read GAGGVGKSA and VD. The Effector region signature appears at 32–40; the sequence is YDPTIEDSY. Thr35 carries (Microbial infection) O-linked (Glc) threonine; by P.sordellii toxin TcsL glycosylation. Residue 57–61 participates in GTP binding; it reads DTAGQ. Ser89 carries the phosphoserine modification. 116 to 119 is a binding site for GTP; sequence NKCD. Positions 166 to 185 are hypervariable region; sequence YRMKKLNSSDDGTQGCMGLP. Residue Lys170 forms a Glycyl lysine isopeptide (Lys-Gly) (interchain with G-Cter in ubiquitin) linkage. Residue Cys181 is the site of S-palmitoyl cysteine attachment. Residue Cys186 is the site of S-farnesyl cysteine attachment. A propeptide spans 187–189 (removed in mature form); sequence VVM.

Belongs to the small GTPase superfamily. Ras family. As to quaternary structure, interacts (active GTP-bound form preferentially) with RGS14. Interacts (active GTP-bound form) with RASSF7. Interacts (active GTP-bound form) with both SHOC2 and PP1c (all isoforms) to form a tertiary complex; SHOC2 and PP1c preferably bind M-Ras/MRAS, but they also bind K-Ras/KRAS, N-Ras/NRAS and H-Ras/HRAS. In terms of processing, palmitoylated by the ZDHHC9-GOLGA7 complex. Depalmitoylated by ABHD17A, ABHD17B and ABHD17C. A continuous cycle of de- and re-palmitoylation regulates rapid exchange between plasma membrane and Golgi. Post-translationally, acetylation at Lys-104 prevents interaction with guanine nucleotide exchange factors (GEFs). Fatty-acylated at Lys-169 and/or Lys-170. In terms of processing, ubiquitinated by the BCR(LZTR1) E3 ubiquitin ligase complex at Lys-170 in a non-degradative manner, leading to inhibit Ras signaling by decreasing Ras association with membranes. Post-translationally, phosphorylation at Ser-89 enhances NRAS association with its downstream effectors. (Microbial infection) Glucosylated at Thr-35 by P.sordellii toxin TcsL.

The protein localises to the cell membrane. It localises to the golgi apparatus membrane. The catalysed reaction is GTP + H2O = GDP + phosphate + H(+). Its activity is regulated as follows. Alternates between an inactive form bound to GDP and an active form bound to GTP. Activated by a guanine nucleotide-exchange factor (GEF) and inactivated by a GTPase-activating protein (GAP). Ras proteins bind GDP/GTP and possess intrinsic GTPase activity. The polypeptide is GTPase NRas (NRAS) (Homo sapiens (Human)).